Reading from the N-terminus, the 587-residue chain is Phosphomethylpyrimidine synthase (587 aa).

Residues N218, M247, Y276, H312, 332-334, 373-376, and E412 each bind substrate; these read SRG and DGLR. H416 provides a ligand contact to Zn(2+). Y439 lines the substrate pocket. H480 lines the Zn(2+) pocket. 3 residues coordinate [4Fe-4S] cluster: C560, C563, and C568.

This sequence belongs to the ThiC family. Requires [4Fe-4S] cluster as cofactor.

The catalysed reaction is 5-amino-1-(5-phospho-beta-D-ribosyl)imidazole + S-adenosyl-L-methionine = 4-amino-2-methyl-5-(phosphooxymethyl)pyrimidine + CO + 5'-deoxyadenosine + formate + L-methionine + 3 H(+). It functions in the pathway cofactor biosynthesis; thiamine diphosphate biosynthesis. Its function is as follows. Catalyzes the synthesis of the hydroxymethylpyrimidine phosphate (HMP-P) moiety of thiamine from aminoimidazole ribotide (AIR) in a radical S-adenosyl-L-methionine (SAM)-dependent reaction. The sequence is that of Phosphomethylpyrimidine synthase from Porphyromonas gingivalis (strain ATCC 33277 / DSM 20709 / CIP 103683 / JCM 12257 / NCTC 11834 / 2561).